We begin with the raw amino-acid sequence, 188 residues long: MSDTILGFNKSNVVLAAGIAGAAFLGYCIYFDHKRINAPDYKDKIRQKRRAQAGAGGMAPRRPAAAGNDAAPDVTDPSQMQRFFLQEVQLGEELMAAGNVDEGAVHIANAVMLCGESQQLLSIFQQTLSEDQFRAVVQQLPSTRERLAEMFGAKADEAENEPPMVQYLGDGPPPAQIQELIDDTDDLE.

Over 1-12 (MSDTILGFNKSN) the chain is Mitochondrial intermembrane. The helical transmembrane segment at 13-31 (VVLAAGIAGAAFLGYCIYF) threads the bilayer. The Cytoplasmic segment spans residues 32 to 188 (DHKRINAPDY…ELIDDTDDLE (157 aa)). 2 disordered regions span residues 42 to 73 (KDKIRQKRRAQAGAGGMAPRRPAAAGNDAAPD) and 156 to 188 (DEAENEPPMVQYLGDGPPPAQIQELIDDTDDLE). The span at 58 to 67 (MAPRRPAAAG) shows a compositional bias: low complexity.

It belongs to the Tom20 family. In terms of assembly, forms part of the preprotein translocase complex of the outer mitochondrial membrane (TOM complex).

The protein resides in the mitochondrion outer membrane. Functionally, central component of the receptor complex responsible for the recognition and translocation of cytosolically synthesized mitochondrial preproteins. Together with tomm-22 functions as the transit peptide receptor at the surface of the mitochondrion outer membrane and facilitates the movement of preproteins into the translocation pore. The sequence is that of Mitochondrial import receptor subunit TOM20 homolog from Caenorhabditis elegans.